A 398-amino-acid polypeptide reads, in one-letter code: Phosphoglycerate kinase (398 aa).

Substrate is bound by residues 23–25, R38, 61–64, R120, and R153; these read DLN and HFGR. Residues K203, E325, and 355–358 contribute to the ATP site; that span reads GGDT.

The protein belongs to the phosphoglycerate kinase family. As to quaternary structure, monomer.

Its subcellular location is the cytoplasm. It catalyses the reaction (2R)-3-phosphoglycerate + ATP = (2R)-3-phospho-glyceroyl phosphate + ADP. Its pathway is carbohydrate degradation; glycolysis; pyruvate from D-glyceraldehyde 3-phosphate: step 2/5. This chain is Phosphoglycerate kinase, found in Sphingopyxis alaskensis (strain DSM 13593 / LMG 18877 / RB2256) (Sphingomonas alaskensis).